The primary structure comprises 89 residues: MAKKSKIAKYHKQLQLIEQYADLRRELKAKGDYEALRKLPRDSNPNRLKNRDRIDGRPHAYMRKFGVSRINFRELAHKGQLPGITKASW.

Belongs to the universal ribosomal protein uS14 family. As to quaternary structure, part of the 30S ribosomal subunit. Contacts proteins S3 and S10.

Its function is as follows. Binds 16S rRNA, required for the assembly of 30S particles and may also be responsible for determining the conformation of the 16S rRNA at the A site. The protein is Small ribosomal subunit protein uS14A of Streptococcus equi subsp. zooepidemicus (strain MGCS10565).